Consider the following 105-residue polypeptide: Small ribosomal subunit protein uS10 (105 aa).

The protein belongs to the universal ribosomal protein uS10 family. In terms of assembly, part of the 30S ribosomal subunit.

In terms of biological role, involved in the binding of tRNA to the ribosomes. This Gloeothece citriformis (strain PCC 7424) (Cyanothece sp. (strain PCC 7424)) protein is Small ribosomal subunit protein uS10.